The chain runs to 165 residues: Ecotin-like protein 4 (165 aa).

The protein belongs to the protease inhibitor I11 (ecotin) family.

This chain is Ecotin-like protein 4, found in Trypanosoma brucei brucei (strain 927/4 GUTat10.1).